A 507-amino-acid chain; its full sequence is Phosphoprotein (507 aa).

The interaction with N0 stretch occupies residues M1–A48. Disordered regions lie at residues S40 to L100, G134 to Y163, N201 to T232, G250 to P273, and W285 to D309. Phosphoserine is present on S86. Over residues G134–D145 the composition is skewed to low complexity. Positions N146 to T160 are enriched in acidic residues. Phosphoserine is present on S151. The span at S260 to G270 shows a compositional bias: low complexity. Polar residues predominate over residues T286–E301. The multimerization stretch occupies residues G304–G376. D314 is a Ca(2+) binding site. 2 interaction with the L polymerase regions span residues S361–L377 and P396–L410. The interval G457–K507 is x domain (XD). Residues A459 to K507 are interaction with the nucleocapsid (N-RNA).

This sequence belongs to the morbillivirus P protein family. Homotetramer. Interacts (via multimerization domain and XD domain) with polymerase L; this interaction forms the polymerase L-P complex. Interacts (via N-terminus) with N0 (via Ncore); this interaction allows P to chaperon N0 to avoid N polymerization and non-specific RNA binding before encapsidation. Interacts (via C-terminus) with N-RNA template (via Ntail); this interaction maintains the P/L complex anchored to the nucleocapsid template during the sequential transcription. Interacts (via C-terminus) with protein C this interaction allows C to associate with the ribonucleocapsid. In terms of processing, phosphorylation on serines by host CK2 is necessary for the formation of viral factories.

In terms of biological role, essential cofactor of the RNA polymerase L that plays a central role in the transcription and replication by forming the polymerase complex with RNA polymerase L and recruiting L to the genomic N-RNA template for RNA synthesis. Also plays a central role in the encapsidation of nascent RNA chains by forming the encapsidation complex with the nucleocapsid protein N (N-P complex). Acts as a chaperone for newly synthesized free N protein, so-called N0, allowing encapsidation of nascent RNA chains during replication. The nucleoprotein protein N prevents excessive phosphorylation of P, which leads to down-regulation of viral transcription/ replication. Participates, together with N, in the formation of viral factories (viroplasms), which are large inclusions in the host cytoplasm where replication takes place. The protein is Phosphoprotein (P/V) of Measles virus (strain Edmonston B) (MeV).